The primary structure comprises 230 residues: Type 4 apparatus protein DotY (230 aa).

The tract at residues 202 to 230 (EPKALETKREEIRQEIESGAEAPTTQSIR) is disordered. The segment covering 204–217 (KALETKREEIRQEI) has biased composition (basic and acidic residues).

The T4BSS is a complex nanomachine composed of several subcomplexes. This subunit is part of the Type IV Coupling Complex (T4CC), a subcomplex composed of the DotLMNYZ core and the IcmSW-LvgA adapter subunits, linked by the C-terminal tail of DotL. Six DotLMNYZ hetero-pentameric units may assemble into a hexameric nanomachine, forming an inner membrane channel for effectors to pass through. Interacts exclusively with DotZ. DotY and DotZ are co-dependent for the assembly into the T4CC.

Its subcellular location is the cytoplasm. Functionally, component of the Dot/Icm type IVB secretion system (T4BSS), which is used to inject bacterial effector proteins into eukaryotic host cells. Part of a subcomplex which recruits effector proteins and delivers them to the core transmembrane subcomplex. DotY and DotZ play a role in effector translocation, but are not essential and do not influence the stability of the subcomplex main components. The DotY/DotZ main function is to optimize secretion by modulating the delivery trajectory of the IcmSW module and the localization of the machinery to the poles. This is Type 4 apparatus protein DotY from Legionella pneumophila subsp. pneumophila (strain Philadelphia 1 / ATCC 33152 / DSM 7513).